We begin with the raw amino-acid sequence, 868 residues long: Facilitated trehalose transporter Tret1 (868 aa).

Disordered regions lie at residues 1–213 and 257–314; these read MSGR…QKAT and KESS…LIHR. Over 1–403 the chain is Cytoplasmic; that stretch reads MSGRDNRGAG…VYRPTTNPIY (403 aa). The segment covering 25-43 has biased composition (basic and acidic residues); it reads KLKEKLTRAGDDQGYHRVE. Low complexity-rich tracts occupy residues 44–57, 79–91, and 117–126; these read SNLS…SLDT, PQQQ…QQLR, and PFQQQQQRTP. 2 stretches are compositionally biased toward basic and acidic residues: residues 146–155 and 257–290; these read EIREHRDRQQ and KESS…KLDK. 5 positions are modified to phosphoserine: Ser259, Ser260, Ser261, Ser331, and Ser333. Residues 335–367 form a disordered region; it reads EDFHTSRQHFQQQRSISTDSRKSRRPYEMDEMG. Residues 342–352 are compositionally biased toward polar residues; sequence QHFQQQRSIST. Residues 353–367 show a composition bias toward basic and acidic residues; the sequence is DSRKSRRPYEMDEMG. Residues 404–424 traverse the membrane as a helical segment; that stretch reads IWTQVLAALSVSLGSLVVGFV. Over 425 to 451 the chain is Extracellular; that stretch reads SAYTSPALVSMTNRNMTSFEVTPQAAS. N-linked (GlcNAc...) asparagine glycosylation occurs at Asn439. Residues 452-472 form a helical membrane-spanning segment; it reads WVGGIMPLAGLAGGIAGGPFI. The Cytoplasmic portion of the chain corresponds to 473 to 484; the sequence is EYLGRRNTILAT. Residues 485-505 traverse the membrane as a helical segment; the sequence is AIPFIVSSLLIACAVNVAMVL. The Extracellular segment spans residues 506–508; sequence AGR. Residues 509-529 form a helical membrane-spanning segment; sequence FLAGFCVGIASLSLPVYLGET. The Cytoplasmic portion of the chain corresponds to 530–535; it reads VQPEVR. Residues 536-556 traverse the membrane as a helical segment; it reads GTLGLLPTAFGNIGILLCFVA. Over 557-563 the chain is Extracellular; it reads GTYMDWS. A helical membrane pass occupies residues 564–584; the sequence is MLAFLGAALPVPFLILMFLIP. Residues 585–653 lie on the Cytoplasmic side of the membrane; sequence ETPRWFVSRG…NLKPLSISLG (69 aa). The chain crosses the membrane as a helical span at residues 654 to 674; sequence LMFFQQLSGINAVIFYTVSIF. Residues 675 to 684 lie on the Extracellular side of the membrane; sequence KDAGSTIDGN. A helical transmembrane segment spans residues 685-705; it reads LCTIIVGIVNFMATFIATLLI. Topologically, residues 706–711 are cytoplasmic; that stretch reads DRAGRK. Residues 712–732 traverse the membrane as a helical segment; the sequence is ILLYVSNIAMIITLFVLGGFF. Residues 733-751 lie on the Extracellular side of the membrane; it reads YCKSHGQDVSQLGWLPLSC. Residues 752 to 772 form a helical membrane-spanning segment; the sequence is FVIYILGFSLGFGPIPWLMMG. Over 773–778 the chain is Cytoplasmic; the sequence is EILPSK. Residues 779-799 traverse the membrane as a helical segment; sequence IRGSAASVATAFNWSCTFVVT. Residues 800–812 lie on the Extracellular side of the membrane; that stretch reads KTFQDMIDFMGAH. Residues 813-833 form a helical membrane-spanning segment; it reads GAFWLFGSICFIGLFFVILYV. Residues 834–868 lie on the Cytoplasmic side of the membrane; that stretch reads PETQGKTLEDIERKMMGRVRRMSSVANMKPLAFNM. 2 positions are modified to phosphoserine: Ser856 and Ser857.

This sequence belongs to the major facilitator superfamily. Sugar transporter (TC 2.A.1.1) family. Trehalose transporter subfamily.

Its subcellular location is the cell membrane. Its function is as follows. Low-capacity facilitative transporter for trehalose. Does not transport maltose, sucrose or lactose. Mediates the bidirectional transfer of trehalose. Responsible for the transport of trehalose synthesized in the fat body and the incorporation of trehalose into other tissues that require a carbon source, thereby regulating trehalose levels in the hemolymph. The polypeptide is Facilitated trehalose transporter Tret1 (Drosophila pseudoobscura pseudoobscura (Fruit fly)).